Consider the following 313-residue polypeptide: Ribosomal RNA small subunit methyltransferase H (313 aa).

S-adenosyl-L-methionine-binding positions include 36-38 (GGH), Asp56, Phe80, Asp102, and Gln109.

The protein belongs to the methyltransferase superfamily. RsmH family.

Its subcellular location is the cytoplasm. The enzyme catalyses cytidine(1402) in 16S rRNA + S-adenosyl-L-methionine = N(4)-methylcytidine(1402) in 16S rRNA + S-adenosyl-L-homocysteine + H(+). Functionally, specifically methylates the N4 position of cytidine in position 1402 (C1402) of 16S rRNA. The protein is Ribosomal RNA small subunit methyltransferase H of Actinobacillus pleuropneumoniae serotype 3 (strain JL03).